A 1009-amino-acid chain; its full sequence is 2-oxoglutarate dehydrogenase, mitochondrial (1009 aa).

Residues 1–39 constitute a mitochondrion transit peptide; the sequence is MLRFIPSSAKARALRRSAVTAYRLNRLTCLSSLQQNRTF. Positions 305, 404, 437, 439, and 669 each coordinate thiamine diphosphate. Mg(2+) contacts are provided by Asp404, Asn437, and Ile439.

This sequence belongs to the alpha-ketoglutarate dehydrogenase family. Thiamine diphosphate serves as cofactor. It depends on Mg(2+) as a cofactor.

It localises to the mitochondrion matrix. The catalysed reaction is N(6)-[(R)-lipoyl]-L-lysyl-[protein] + 2-oxoglutarate + H(+) = N(6)-[(R)-S(8)-succinyldihydrolipoyl]-L-lysyl-[protein] + CO2. With respect to regulation, catabolite repressed. Its function is as follows. The 2-oxoglutarate dehydrogenase complex catalyzes the overall conversion of 2-oxoglutarate to succinyl-CoA and CO(2). It contains multiple copies of three enzymatic components: 2-oxoglutarate dehydrogenase (E1), dihydrolipoamide succinyltransferase (E2) and lipoamide dehydrogenase (E3). The polypeptide is 2-oxoglutarate dehydrogenase, mitochondrial (kgd1) (Schizosaccharomyces pombe (strain 972 / ATCC 24843) (Fission yeast)).